We begin with the raw amino-acid sequence, 293 residues long: NAD kinase (293 aa).

Aspartate 72 (proton acceptor) is an active-site residue. Residues 72–73 (DG), 146–147 (ND), arginine 157, lysine 174, aspartate 176, 187–192 (TAYALS), and glutamine 247 each bind NAD(+).

Belongs to the NAD kinase family. The cofactor is a divalent metal cation.

The protein resides in the cytoplasm. It catalyses the reaction NAD(+) + ATP = ADP + NADP(+) + H(+). Its function is as follows. Involved in the regulation of the intracellular balance of NAD and NADP, and is a key enzyme in the biosynthesis of NADP. Catalyzes specifically the phosphorylation on 2'-hydroxyl of the adenosine moiety of NAD to yield NADP. The sequence is that of NAD kinase from Marinomonas sp. (strain MWYL1).